The sequence spans 722 residues: Ras and EF-hand domain-containing protein (722 aa).

EF-hand domains follow at residues 5–39 and 39–74; these read DELSRLRALFHTFDSKSSGRLEKGQFSALCAELKV and VSPSEAEDIFARLDSDKDSCITFEDFAMGFRGARGL. Over residues 75–84 the composition is skewed to basic and acidic residues; it reads HMPEGKKDVE. The tract at residues 75–109 is disordered; the sequence is HMPEGKKDVEQGEPPKSPSTPDKEEKPEETSSPAW. A coiled-coil region spans residues 156–335; it reads REIRLQSTEM…ANRKLHDSND (180 aa). Residues 355-374 show a composition bias toward polar residues; the sequence is INTSPGSTISRNSPKLTRCT. 2 disordered regions span residues 355–384 and 439–491; these read INTSPGSTISRNSPKLTRCTSPYDRSPRSS and FHRS…SGAS. Low complexity predominate over residues 480–491; sequence SNPVSRSSSGAS. GTP contacts are provided by residues 532–537, 635–638, and 672–673; these read AVGKSS, NKAD, and AK.

The protein belongs to the small GTPase superfamily. Rab family. Homodimer.

It is found in the cytoplasm. Its subcellular location is the perinuclear region. Functionally, binds predominantly GDP, and also GTP. The polypeptide is Ras and EF-hand domain-containing protein (rasef) (Xenopus tropicalis (Western clawed frog)).